Reading from the N-terminus, the 168-residue chain is Zinc-finger homeodomain protein 14 (168 aa).

The ZF-HD dimerization-type; degenerate zinc finger occupies 7 to 51 (YRECMRNHAAKLGSYAIDGCREYSQPSTGDLCVACGCHRSYHRRI). A coiled-coil region spans residues 76–103 (ARLKWKTAEERNEEEEDDTEETSTEEKM). The interval 82-112 (TAEERNEEEEDDTEETSTEEKMTVQRRRKSK) is disordered. Residues 86–98 (RNEEEEDDTEETS) show a composition bias toward acidic residues. The homeobox DNA-binding region spans 106–168 (QRRRKSKFTA…WVNNNKKFYH (63 aa)).

In terms of assembly, homo- and heterodimer with other ZFHD proteins. Interacts with ZHD11. In terms of tissue distribution, mostly expressed in flowers and stems.

It localises to the nucleus. Functionally, putative transcription factor. The polypeptide is Zinc-finger homeodomain protein 14 (ZHD14) (Arabidopsis thaliana (Mouse-ear cress)).